The chain runs to 378 residues: MMYASDGSGVNPFQQYGITTGLTAAAAAKACTLTVLKGVQNRVVVPTPIGIRIEVKVVESVRIDESSGYASAEKFSGDNPDQLNGITIRCHCKVVKKQENGRSKITISGNAGIGVVEKDGLGIRPGEKAISQGARKMIEDAVREAAGGYDVELSISVPNGEEFAKLTMNEKVGVFGGISVLGTTGIEEPVSTEEYELHLKYIVAAGRCVSKIIVLCPGNTALKFAKKYFALPDKAFVLIGDKVGAAVSASIESAYDHVVIFGLPGKLVKIAAGIYNTHSKVADGRMETLAAVAAMYGISKGAVKRIMESSNTGEAISIIEQEGIVAEVLNTIASRISNRLKADFSRSVGFSVVIIDHDGKIIGSHLDGHIKEVLKYGK.

The protein belongs to the CbiD family.

The catalysed reaction is Co-precorrin-5B + S-adenosyl-L-methionine = Co-precorrin-6A + S-adenosyl-L-homocysteine. The protein operates within cofactor biosynthesis; adenosylcobalamin biosynthesis; cob(II)yrinate a,c-diamide from sirohydrochlorin (anaerobic route): step 6/10. Catalyzes the methylation of C-1 in cobalt-precorrin-5B to form cobalt-precorrin-6A. The sequence is that of Cobalt-precorrin-5B C(1)-methyltransferase from Thermoplasma volcanium (strain ATCC 51530 / DSM 4299 / JCM 9571 / NBRC 15438 / GSS1).